The following is a 447-amino-acid chain: tRNA-2-methylthio-N(6)-dimethylallyladenosine synthase (447 aa).

The region spanning 3–120 (KKLYIETHGC…LPEMIDAART (118 aa)) is the MTTase N-terminal domain. C12, C49, C83, C157, C161, and C164 together coordinate [4Fe-4S] cluster. Residues 143–375 (RVDGPSAFVS…QHRINQYGFE (233 aa)) form the Radical SAM core domain. Residues 378-442 (RRMVGTVQRI…PHSLRGTLLD (65 aa)) enclose the TRAM domain.

It belongs to the methylthiotransferase family. MiaB subfamily. In terms of assembly, monomer. The cofactor is [4Fe-4S] cluster.

The protein resides in the cytoplasm. It carries out the reaction N(6)-dimethylallyladenosine(37) in tRNA + (sulfur carrier)-SH + AH2 + 2 S-adenosyl-L-methionine = 2-methylsulfanyl-N(6)-dimethylallyladenosine(37) in tRNA + (sulfur carrier)-H + 5'-deoxyadenosine + L-methionine + A + S-adenosyl-L-homocysteine + 2 H(+). Functionally, catalyzes the methylthiolation of N6-(dimethylallyl)adenosine (i(6)A), leading to the formation of 2-methylthio-N6-(dimethylallyl)adenosine (ms(2)i(6)A) at position 37 in tRNAs that read codons beginning with uridine. The chain is tRNA-2-methylthio-N(6)-dimethylallyladenosine synthase from Ectopseudomonas mendocina (strain ymp) (Pseudomonas mendocina).